We begin with the raw amino-acid sequence, 78 residues long: Large ribosomal subunit protein bL28 (78 aa).

The interval 1–21 (MSRVCQVTGKKPMVGNNRSHA) is disordered.

Belongs to the bacterial ribosomal protein bL28 family.

This Shewanella loihica (strain ATCC BAA-1088 / PV-4) protein is Large ribosomal subunit protein bL28.